The following is a 403-amino-acid chain: Presqualene diphosphate synthase (403 aa).

Mg(2+)-binding residues include Asp-84, Glu-87, and Asp-88.

It belongs to the phytoene/squalene synthase family. Mg(2+) serves as cofactor.

It catalyses the reaction 2 (2E,6E)-farnesyl diphosphate = presqualene diphosphate + diphosphate. Its function is as follows. Catalyzes the biosynthesis of presqualene diphosphate (PSPP). Works in combination with SSL-2 or SSL-3 to produce respectively squalene or botryococcene. In most other species, farnesyl diphosphate (FPP) is converted into squalene in a two-step reaction by a single enzyme. This Botryococcus braunii (Green alga) protein is Presqualene diphosphate synthase (SSL-1).